Here is a 253-residue protein sequence, read N- to C-terminus: Electron transfer flavoprotein subunit beta, mitochondrial (253 aa).

It belongs to the ETF beta-subunit/FixA family. In terms of assembly, heterodimer of an alpha and a beta subunit. FAD serves as cofactor. Requires AMP as cofactor.

Its subcellular location is the mitochondrion matrix. Its function is as follows. The electron transfer flavoprotein serves as a specific electron acceptor for several dehydrogenases, including five acyl-CoA dehydrogenases, glutaryl-CoA and sarcosine dehydrogenase. It transfers the electrons to the main mitochondrial respiratory chain via ETF-ubiquinone oxidoreductase (ETF dehydrogenase). In Oryza sativa subsp. indica (Rice), this protein is Electron transfer flavoprotein subunit beta, mitochondrial (ETFB).